Consider the following 193-residue polypeptide: Small ribosomal subunit protein eS1 (193 aa).

This sequence belongs to the eukaryotic ribosomal protein eS1 family.

This chain is Small ribosomal subunit protein eS1, found in Sulfurisphaera tokodaii (strain DSM 16993 / JCM 10545 / NBRC 100140 / 7) (Sulfolobus tokodaii).